Here is a 151-residue protein sequence, read N- to C-terminus: FAD synthase (151 aa).

Residues 12-13 (TF), 17-20 (HPGH), Asp-97, and Tyr-125 contribute to the ATP site.

The protein belongs to the archaeal FAD synthase family. As to quaternary structure, homodimer. Requires a divalent metal cation as cofactor.

The catalysed reaction is FMN + ATP + H(+) = FAD + diphosphate. It participates in cofactor biosynthesis; FAD biosynthesis; FAD from FMN: step 1/1. Functionally, catalyzes the transfer of the AMP portion of ATP to flavin mononucleotide (FMN) to produce flavin adenine dinucleotide (FAD) coenzyme. The protein is FAD synthase of Methanocaldococcus sp. (strain FS406-22).